A 93-amino-acid chain; its full sequence is Alpha-defensin 13 (93 aa).

Residues M1–A19 form the signal peptide. A propeptide spanning residues D20–S58 is cleaved from the precursor. A disordered region spans residues I22 to L54. Intrachain disulfides connect C64–C92, C66–C81, and C71–C91.

Belongs to the alpha-defensin family. In terms of tissue distribution, paneth cells of the small bowel.

It is found in the secreted. Its function is as follows. Probably contributes to the antimicrobial barrier function of the small bowel mucosa. In Mus musculus (Mouse), this protein is Alpha-defensin 13 (Defa13).